A 79-amino-acid chain; its full sequence is Small serum protein 3 (79 aa).

A signal peptide spans 1 to 19 (MKVFFILIIFSFTLATCQG). Disulfide bonds link Cys-21-Cys-72, Cys-39-Cys-64, and Cys-62-Cys-71.

It is found in the secreted. In terms of biological role, shows an slight inhibitory effect toward the metalloproteinase brevilysin H6, but does not inhibit the metalloproteinases thermolysin, HR1A and HR1B. The protein is Small serum protein 3 of Protobothrops flavoviridis (Habu).